The chain runs to 386 residues: Ferrochelatase (386 aa).

Residues H196 and E277 each coordinate Fe cation.

Belongs to the ferrochelatase family.

Its subcellular location is the cytoplasm. It catalyses the reaction heme b + 2 H(+) = protoporphyrin IX + Fe(2+). Its pathway is porphyrin-containing compound metabolism; protoheme biosynthesis; protoheme from protoporphyrin-IX: step 1/1. Its function is as follows. Catalyzes the ferrous insertion into protoporphyrin IX. In Picosynechococcus sp. (strain ATCC 27264 / PCC 7002 / PR-6) (Agmenellum quadruplicatum), this protein is Ferrochelatase.